The following is a 197-amino-acid chain: Crossover junction endodeoxyribonuclease RuvC (197 aa).

Catalysis depends on residues D7, E68, and D141. 3 residues coordinate Mg(2+): D7, E68, and D141. Low complexity-rich tracts occupy residues 165–181 (AAPA…TPAR) and 188–197 (APARRPAGAS). Residues 165–197 (AAPAAPVSRPAPATPARRSPRPAAPARRPAGAS) are disordered.

Belongs to the RuvC family. In terms of assembly, homodimer which binds Holliday junction (HJ) DNA. The HJ becomes 2-fold symmetrical on binding to RuvC with unstacked arms; it has a different conformation from HJ DNA in complex with RuvA. In the full resolvosome a probable DNA-RuvA(4)-RuvB(12)-RuvC(2) complex forms which resolves the HJ. Mg(2+) is required as a cofactor.

It localises to the cytoplasm. The catalysed reaction is Endonucleolytic cleavage at a junction such as a reciprocal single-stranded crossover between two homologous DNA duplexes (Holliday junction).. Functionally, the RuvA-RuvB-RuvC complex processes Holliday junction (HJ) DNA during genetic recombination and DNA repair. Endonuclease that resolves HJ intermediates. Cleaves cruciform DNA by making single-stranded nicks across the HJ at symmetrical positions within the homologous arms, yielding a 5'-phosphate and a 3'-hydroxyl group; requires a central core of homology in the junction. The consensus cleavage sequence is 5'-(A/T)TT(C/G)-3'. Cleavage occurs on the 3'-side of the TT dinucleotide at the point of strand exchange. HJ branch migration catalyzed by RuvA-RuvB allows RuvC to scan DNA until it finds its consensus sequence, where it cleaves and resolves the cruciform DNA. This chain is Crossover junction endodeoxyribonuclease RuvC, found in Frankia alni (strain DSM 45986 / CECT 9034 / ACN14a).